A 479-amino-acid polypeptide reads, in one-letter code: Aspartyl/glutamyl-tRNA(Asn/Gln) amidotransferase subunit B (479 aa).

Belongs to the GatB/GatE family. GatB subfamily. Heterotrimer of A, B and C subunits.

It carries out the reaction L-glutamyl-tRNA(Gln) + L-glutamine + ATP + H2O = L-glutaminyl-tRNA(Gln) + L-glutamate + ADP + phosphate + H(+). It catalyses the reaction L-aspartyl-tRNA(Asn) + L-glutamine + ATP + H2O = L-asparaginyl-tRNA(Asn) + L-glutamate + ADP + phosphate + 2 H(+). Functionally, allows the formation of correctly charged Asn-tRNA(Asn) or Gln-tRNA(Gln) through the transamidation of misacylated Asp-tRNA(Asn) or Glu-tRNA(Gln) in organisms which lack either or both of asparaginyl-tRNA or glutaminyl-tRNA synthetases. The reaction takes place in the presence of glutamine and ATP through an activated phospho-Asp-tRNA(Asn) or phospho-Glu-tRNA(Gln). The chain is Aspartyl/glutamyl-tRNA(Asn/Gln) amidotransferase subunit B from Clostridium beijerinckii (strain ATCC 51743 / NCIMB 8052) (Clostridium acetobutylicum).